The chain runs to 100 residues: NADH-quinone oxidoreductase subunit K (100 aa).

3 consecutive transmembrane segments (helical) span residues 4–24, 29–49, and 60–80; these read LQHGLILAAILFVLGLTGLII, LFMLIGLEVMINAAALAFVVV, and VMFILAISLAAAEASIGLALL.

Belongs to the complex I subunit 4L family. In terms of assembly, NDH-1 is composed of 13 different subunits. Subunits NuoA, H, J, K, L, M, N constitute the membrane sector of the complex.

The protein localises to the cell inner membrane. The catalysed reaction is a quinone + NADH + 5 H(+)(in) = a quinol + NAD(+) + 4 H(+)(out). NDH-1 shuttles electrons from NADH, via FMN and iron-sulfur (Fe-S) centers, to quinones in the respiratory chain. The immediate electron acceptor for the enzyme in this species is believed to be ubiquinone. Couples the redox reaction to proton translocation (for every two electrons transferred, four hydrogen ions are translocated across the cytoplasmic membrane), and thus conserves the redox energy in a proton gradient. This Photorhabdus laumondii subsp. laumondii (strain DSM 15139 / CIP 105565 / TT01) (Photorhabdus luminescens subsp. laumondii) protein is NADH-quinone oxidoreductase subunit K.